We begin with the raw amino-acid sequence, 338 residues long: UPF0284 protein TV0153 (338 aa).

It belongs to the UPF0284 family.

This is UPF0284 protein TV0153 from Thermoplasma volcanium (strain ATCC 51530 / DSM 4299 / JCM 9571 / NBRC 15438 / GSS1).